We begin with the raw amino-acid sequence, 289 residues long: D-alanine aminotransferase (289 aa).

Residue Tyr-31 participates in substrate binding. Arg-50 provides a ligand contact to pyridoxal 5'-phosphate. Substrate-binding residues include Arg-99 and His-101. At Lys-147 the chain carries N6-(pyridoxal phosphate)lysine. Glu-179 is a pyridoxal 5'-phosphate binding site.

This sequence belongs to the class-IV pyridoxal-phosphate-dependent aminotransferase family. As to quaternary structure, homodimer. Pyridoxal 5'-phosphate serves as cofactor.

It carries out the reaction D-alanine + 2-oxoglutarate = D-glutamate + pyruvate. Functionally, acts on the D-isomers of alanine, leucine, aspartate, glutamate, aminobutyrate, norvaline and asparagine. The enzyme transfers an amino group from a substrate D-amino acid to the pyridoxal phosphate cofactor to form pyridoxamine and an alpha-keto acid in the first half-reaction. The second half-reaction is the reverse of the first, transferring the amino group from the pyridoxamine to a second alpha-keto acid to form the product D-amino acid via a ping-pong mechanism. This is an important process in the formation of D-alanine and D-glutamate, which are essential bacterial cell wall components. The protein is D-alanine aminotransferase (dat) of Listeria monocytogenes serotype 1/2a (strain 10403S).